The following is a 279-amino-acid chain: Putative pyruvate, phosphate dikinase regulatory protein (279 aa).

153 to 160 (GVSRTSKT) is an ADP binding site.

It belongs to the pyruvate, phosphate/water dikinase regulatory protein family. PDRP subfamily.

The enzyme catalyses N(tele)-phospho-L-histidyl/L-threonyl-[pyruvate, phosphate dikinase] + ADP = N(tele)-phospho-L-histidyl/O-phospho-L-threonyl-[pyruvate, phosphate dikinase] + AMP + H(+). It catalyses the reaction N(tele)-phospho-L-histidyl/O-phospho-L-threonyl-[pyruvate, phosphate dikinase] + phosphate + H(+) = N(tele)-phospho-L-histidyl/L-threonyl-[pyruvate, phosphate dikinase] + diphosphate. Bifunctional serine/threonine kinase and phosphorylase involved in the regulation of the pyruvate, phosphate dikinase (PPDK) by catalyzing its phosphorylation/dephosphorylation. This chain is Putative pyruvate, phosphate dikinase regulatory protein, found in Rhodopseudomonas palustris (strain HaA2).